A 677-amino-acid chain; its full sequence is Methionine--tRNA ligase (677 aa).

The 'HIGH' region motif lies at 15-25 (PYANGSIHLGH). Zn(2+) contacts are provided by cysteine 146, cysteine 149, cysteine 159, and cysteine 162. A 'KMSKS' region motif is present at residues 333-337 (KMSKS). Residue lysine 336 coordinates ATP. Residues 576-677 (DFAKIDLRVA…EGAKPGMRVK (102 aa)) form the tRNA-binding domain.

The protein belongs to the class-I aminoacyl-tRNA synthetase family. MetG type 1 subfamily. Homodimer. Requires Zn(2+) as cofactor.

It is found in the cytoplasm. It carries out the reaction tRNA(Met) + L-methionine + ATP = L-methionyl-tRNA(Met) + AMP + diphosphate. Its function is as follows. Is required not only for elongation of protein synthesis but also for the initiation of all mRNA translation through initiator tRNA(fMet) aminoacylation. The protein is Methionine--tRNA ligase of Aeromonas hydrophila subsp. hydrophila (strain ATCC 7966 / DSM 30187 / BCRC 13018 / CCUG 14551 / JCM 1027 / KCTC 2358 / NCIMB 9240 / NCTC 8049).